The following is a 540-amino-acid chain: Calnexin homolog (540 aa).

An N-terminal signal peptide occupies residues Met1–Ala29. At Ser30–Thr469 the chain is on the lumenal side. Ser38 and Asp69 together coordinate Ca(2+). An intrachain disulfide couples Cys112 to Cys147. Tyr116, Lys118, Tyr138, and Asp145 together coordinate an alpha-D-glucoside. The tract at residues Leu221–Trp301 is disordered. The tract at residues Ile227–Glu360 is p domain (Extended arm). Over residues Pro228–Asp253 the composition is skewed to basic and acidic residues. 5 repeat units span residues Asp229–Glu240, Asp246–Glu257, Asp265–Asp276, Asp284–Asp295, and Gly299–Pro309. 4 X approximate repeats stretches follow at residues Asp229 to Asp295 and Gly299 to Pro356. Acidic residues-rich tracts occupy residues Asp254–Pro285 and Asp292–Trp301. A disulfide bond links Cys311 and Cys317. 3 consecutive repeat copies span residues Gly318–Pro328, Gly332–Pro342, and Gly346–Pro356. Glu375 is a binding site for an alpha-D-glucoside. Asp386 provides a ligand contact to Ca(2+). Asn467 carries N-linked (GlcNAc...) asparagine glycosylation. A helical membrane pass occupies residues Ile470–Gly490. Over Gly491–Thr540 the chain is Cytoplasmic. Residues Asn499–Thr540 are disordered.

Belongs to the calreticulin family.

It localises to the endoplasmic reticulum membrane. Calcium-binding protein that interacts with newly synthesized monoglucosylated glycoproteins in the endoplasmic reticulum. It may act in assisting protein assembly and/or in the retention within the ER of unassembled protein subunits. It seems to play a major role in the quality control apparatus of the ER by the retention of incorrectly folded proteins. In Helianthus tuberosus (Jerusalem artichoke), this protein is Calnexin homolog.